Consider the following 410-residue polypeptide: 26S proteasome non-ATPase regulatory subunit 6 (410 aa).

The 176-residue stretch at 207-382 folds into the PCI domain; it reads DFAGAADLFL…GVIEVNHRDS (176 aa).

The protein belongs to the proteasome subunit S10 family. Expressed in multiple tissues including the intestine, pharynx and hypodermis.

Acts as a regulatory subunit of the 26S proteasome which is involved in the ATP-dependent degradation of ubiquitinated proteins. The chain is 26S proteasome non-ATPase regulatory subunit 6 (rpn-7) from Caenorhabditis elegans.